The primary structure comprises 455 residues: MALWGGRFQGETSALFKLFNDSLPVDYRLFEQDVVGSIAWADAIASVGIITATECSDLKKALNDLLVEVNGDPAIILASGAEDIHSFVESALIAKVGDLGKKLHTGRSRNDQVATDLKLWCQSEGAALLARLHSLHAELLALAEREFDAVMPGYTHLQRAQPVTFGHWCLAYVEMYERDISRLADALTRANTCPLGSGALAGTAYKMDRHALAAALNFAAPTLNSLDSVSDRDHVVELCSTASISMMHLSRMAEDLIFFNSGEANFISLSDEVTSGSSLMPQKKNPDALELIRGKTGRVYGSLVGILTTMKALPLAYNKDMQEDKEGLFDVVDSWAICLDMAALVLSGLKVNRPNALLAAQQGYANSTELADYLVSKGMPFREAHHVVGEVVVAAIAKQIPLEDFSLAELKTFAAIIEDDVYPNLTIEACLAKRDVLGGTALPQIQQAIAAKKAR.

This sequence belongs to the lyase 1 family. Argininosuccinate lyase subfamily.

The protein localises to the cytoplasm. The enzyme catalyses 2-(N(omega)-L-arginino)succinate = fumarate + L-arginine. It functions in the pathway amino-acid biosynthesis; L-arginine biosynthesis; L-arginine from L-ornithine and carbamoyl phosphate: step 3/3. The protein is Argininosuccinate lyase of Shewanella baltica (strain OS185).